Here is a 178-residue protein sequence, read N- to C-terminus: Putative adenylate kinase (178 aa).

ATP is bound by residues Gly-10, Gly-12, Lys-13, Ser-14, and Ser-15. The tract at residues 29–50 (TVVELAEKHGCIIDEEDGEIVI) is NMP. The tract at residues 94–104 (GRNWSEEKLLE) is LID. Arg-95 provides a ligand contact to ATP.

It belongs to the adenylate kinase family. AK6 subfamily. Interacts with uS11. Not a structural component of 40S pre-ribosomes, but transiently interacts with them by binding to uS11.

It catalyses the reaction AMP + ATP = 2 ADP. The catalysed reaction is ATP + H2O = ADP + phosphate + H(+). Its function is as follows. Broad-specificity nucleoside monophosphate (NMP) kinase that catalyzes the reversible transfer of the terminal phosphate group between nucleoside triphosphates and monophosphates. Also has ATPase activity. Involved in the late maturation steps of the 30S ribosomal particles, specifically 16S rRNA maturation. While NMP activity is not required for ribosome maturation, ATPase activity is. Associates transiently with small ribosomal subunit protein uS11. ATP hydrolysis breaks the interaction with uS11. May temporarily remove uS11 from the ribosome to enable a conformational change of the ribosomal RNA that is needed for the final maturation step of the small ribosomal subunit. The chain is Putative adenylate kinase from Archaeoglobus fulgidus (strain ATCC 49558 / DSM 4304 / JCM 9628 / NBRC 100126 / VC-16).